The primary structure comprises 537 residues: DEAD-box ATP-dependent RNA helicase 5 (537 aa).

The segment at 1–97 (MAGQKQELPV…EDLGEGESEQ (97 aa)) is disordered. Residues 22 to 80 (TNKKKKKSKKNKHTEENHEVEEVPQEVTNGVEEELSNKEKKKKRKREEKESEKNKKKDV) are a coiled coil. A compositionally biased stretch (basic residues) spans 23 to 33 (NKKKKKSKKNK). Residues 68–87 (EEKESEKNKKKDVPEKKLEA) are compositionally biased toward basic and acidic residues. Positions 116-142 (KTFAESNLPENVLDCCKTFEKPSPIQS) match the Q motif motif. Positions 145–324 (WPFLLDGRDL…QEFMDPNPIK (180 aa)) constitute a Helicase ATP-binding domain. Position 158 to 165 (158 to 165 (AKTGSGKT)) interacts with ATP. The DEAD box signature appears at 272–275 (DEAD). The region spanning 349–500 (ARDQRLIALL…VVPADLLKFG (152 aa)) is the Helicase C-terminal domain. At Ser-533 the chain carries Phosphoserine.

It belongs to the DEAD box helicase family. DDX5/DBP2 subfamily.

It localises to the nucleus. Its subcellular location is the nucleolus. It carries out the reaction ATP + H2O = ADP + phosphate + H(+). Functionally, ATP-dependent RNA helicase required for 60S ribosomal subunit synthesis. Involved in efficient pre-rRNA processing, predominantly at site A3, which is necessary for the normal formation of 25S and 5.8S rRNAs. This Arabidopsis thaliana (Mouse-ear cress) protein is DEAD-box ATP-dependent RNA helicase 5 (RH5).